The primary structure comprises 311 residues: Phospholipid phosphatase 3 (311 aa).

The Cytoplasmic portion of the chain corresponds to 1–33; the sequence is MQNYKYDKAIVPESKNGGSPALNNNPRRSGSKR. Phosphoserine is present on S19. Residues 34-54 form a helical membrane-spanning segment; it reads VLLICLDLFCLFMAGLPFLII. The Extracellular segment spans residues 55–85; that stretch reads ETSTIKPYHRGFYCNDESIKYPLKTGETIND. A helical membrane pass occupies residues 86-106; sequence AVLCAVGIVIAILAIITGEFY. The Cytoplasmic segment spans residues 107-122; that stretch reads RIYYLKKSRSTIQNPY. The Dityrosine basolateral targeting motif motif lies at 109-110; the sequence is YY. Residues 123–143 form a helical membrane-spanning segment; sequence VAALYKQVGCFLFGCAISQSF. Over 144-193 the chain is Extracellular; that stretch reads TDIAKVSIGRLRPHFLSVCNPDFSQINCSEGYIQNYRCRGDDSKVQEARK. The tract at residues 148-156 is phosphatase sequence motif I; it reads KVSIGRLRP. N-linked (GlcNAc...) asparagine glycosylation is present at N170. Positions 182–184 match the Integrin-binding motif motif; the sequence is RGD. The helical transmembrane segment at 194–214 threads the bilayer; that stretch reads SFFSGHASFSMYTMLYLVLYL. The tract at residues 196-199 is phosphatase sequence motif II; sequence FSGH. H199 acts as the Proton donors in catalysis. Residues 215-225 are Cytoplasmic-facing; the sequence is QARFTWRGARL. The helical transmembrane segment at 226–243 threads the bilayer; it reads LRPLLQFTLIMMAFYTGL. The phosphatase sequence motif III stretch occupies residues 244 to 255; it reads SRVSDHKHHPSD. Residues 244 to 257 are Extracellular-facing; that stretch reads SRVSDHKHHPSDVL. H251 functions as the Nucleophile in the catalytic mechanism. Residues 258–278 traverse the membrane as a helical segment; sequence AGFAQGALVACCIVFFVSDLF. The interval 275-311 is mediates interaction with CTNND1; sequence SDLFKTKTTLSLPAPAIRKEILSPVDIIDRNNHHNMM. The Cytoplasmic portion of the chain corresponds to 279 to 311; it reads KTKTTLSLPAPAIRKEILSPVDIIDRNNHHNMM.

Belongs to the PA-phosphatase related phosphoesterase family. As to quaternary structure, forms functional homodimers and homooligomers that are not required for substrate recognition and catalytic activity. Can also form heterooligomers with other PLPP2 and PLPP3. Interacts with CTNND1; negatively regulates the PLPP3-mediated stabilization of beta-catenin/CTNNB1. N-glycosylated. Contains high-mannose oligosaccharides. Ubiquitously expressed. Highly expressed in heart and placenta.

It localises to the cell membrane. Its subcellular location is the basolateral cell membrane. The protein localises to the endoplasmic reticulum membrane. The protein resides in the endoplasmic reticulum-Golgi intermediate compartment membrane. It is found in the golgi apparatus membrane. It localises to the golgi apparatus. Its subcellular location is the trans-Golgi network membrane. The protein localises to the membrane raft. The enzyme catalyses a 1,2-diacyl-sn-glycero-3-phosphate + H2O = a 1,2-diacyl-sn-glycerol + phosphate. The catalysed reaction is 1,2-dihexadecanoyl-sn-glycero-3-phosphate + H2O = 1,2-dihexadecanoyl-sn-glycerol + phosphate. It catalyses the reaction 1,2-di-(9Z-octadecenoyl)-sn-glycero-3-phosphate + H2O = 1,2-di-(9Z-octadecenoyl)-sn-glycerol + phosphate. It carries out the reaction a monoacyl-sn-glycero-3-phosphate + H2O = a monoacylglycerol + phosphate. The enzyme catalyses (9Z)-octadecenoyl-sn-glycero-3-phosphate + H2O = (9Z-octadecenoyl)-glycerol + phosphate. The catalysed reaction is sphing-4-enine 1-phosphate + H2O = sphing-4-enine + phosphate. It catalyses the reaction an N-acylsphing-4-enine 1-phosphate + H2O = an N-acylsphing-4-enine + phosphate. It carries out the reaction N-(octanoyl)-sphing-4-enine-1-phosphate + H2O = N-octanoylsphing-4-enine + phosphate. The enzyme catalyses N-(9Z-octadecenoyl)-ethanolamine phosphate + H2O = N-(9Z-octadecenoyl) ethanolamine + phosphate. It participates in lipid metabolism; phospholipid metabolism. Magnesium-independent phospholipid phosphatase. Insensitive to N-ethylmaleimide. Inhibited by sphingosine, zinc ions and modestly by propanolol. In terms of biological role, magnesium-independent phospholipid phosphatase of the plasma membrane that catalyzes the dephosphorylation of a variety of glycerolipid and sphingolipid phosphate esters including phosphatidate/PA, lysophosphatidate/LPA, diacylglycerol pyrophosphate/DGPP, sphingosine 1-phosphate/S1P and ceramide 1-phosphate/C1P. Also acts on N-oleoyl ethanolamine phosphate/N-(9Z-octadecenoyl)-ethanolamine phosphate, a potential physiological compound. Has both an extracellular and an intracellular phosphatase activity, allowing the hydrolysis and the cellular uptake of these bioactive lipid mediators from the milieu, regulating signal transduction in different cellular processes. Through the dephosphorylation of extracellular sphingosine-1-phosphate and the regulation of its extra- and intracellular availability, plays a role in vascular homeostasis, regulating endothelial cell migration, adhesion, survival, proliferation and the production of pro-inflammatory cytokines. By maintaining the appropriate levels of this lipid in the cerebellum, also ensure its proper development and function. Through its intracellular lipid phosphatase activity may act in early compartments of the secretory pathway, regulating the formation of Golgi to endoplasmic reticulum retrograde transport carriers. Functionally, independently of this phosphatase activity may also function in the Wnt signaling pathway and the stabilization of beta-catenin/CTNNB1, thereby regulating cell proliferation, migration and differentiation in angiogenesis or yet in tumor growth. Also plays a role in integrin-mediated cell-cell adhesion in angiogenesis. The protein is Phospholipid phosphatase 3 of Homo sapiens (Human).